Reading from the N-terminus, the 347-residue chain is Gene 34 protein (347 aa).

Residues 95–126 (GKGGEAGQRAGEDDERMDEGVPEEGAPRSPHP) form a disordered region. The span at 106-116 (EDDERMDEGVP) shows a compositional bias: acidic residues.

The protein belongs to the herpesviridae UL95 family.

The polypeptide is Gene 34 protein (34) (Equus caballus (Horse)).